We begin with the raw amino-acid sequence, 111 residues long: Large ribosomal subunit protein uL22 (111 aa).

Belongs to the universal ribosomal protein uL22 family. Part of the 50S ribosomal subunit.

This protein binds specifically to 23S rRNA; its binding is stimulated by other ribosomal proteins, e.g. L4, L17, and L20. It is important during the early stages of 50S assembly. It makes multiple contacts with different domains of the 23S rRNA in the assembled 50S subunit and ribosome. Its function is as follows. The globular domain of the protein is located near the polypeptide exit tunnel on the outside of the subunit, while an extended beta-hairpin is found that lines the wall of the exit tunnel in the center of the 70S ribosome. This is Large ribosomal subunit protein uL22 from Mycoplasma mycoides subsp. mycoides SC (strain CCUG 32753 / NCTC 10114 / PG1).